The primary structure comprises 595 residues: Parathyroid hormone/parathyroid hormone-related peptide receptor (595 aa).

The N-terminal stretch at 1 to 28 (MGAVRIAPGLALLLCCPVLSSAYALVDA) is a signal peptide. Residues 29 to 188 (DDVMTKEEQI…REREVFDRLG (160 aa)) lie on the Extracellular side of the membrane. 3 cysteine pairs are disulfide-bonded: cysteine 48–cysteine 117, cysteine 108–cysteine 148, and cysteine 131–cysteine 170. A disordered region spans residues 66-103 (DKGWASASTSGKPKKEKASGKLYPESEEDKEVPTGSRH). Residues asparagine 151, asparagine 161, asparagine 166, and asparagine 176 are each glycosylated (N-linked (GlcNAc...) asparagine). Residues 189 to 209 (MIYTVGYSVSLASLTVAVLIL) form a helical membrane-spanning segment. The Cytoplasmic segment spans residues 210 to 223 (AYFRRLHCTRNYIH). Residues 224 to 244 (MHLFLSFMLRAVSIFVKDAVL) traverse the membrane as a helical segment. Residues 245 to 294 (YSGATLDEAERLTEEELRAIAQAPPPPTAAAGYAGCRVAVTFFLYFLATN) are Extracellular-facing. The helical transmembrane segment at 295–315 (YYWILVEGLYLHSLIFMAFFS) threads the bilayer. The Cytoplasmic portion of the chain corresponds to 316–318 (EKK). Residues 319-339 (YLWGFTVFGWGLPAVFVAVWV) traverse the membrane as a helical segment. Topologically, residues 340–360 (SVRATLANTGCWDLSSGNKKW) are extracellular. A helical membrane pass occupies residues 361–381 (IIQVPILASIVLNFILFINIV). Over 382–404 (RVLATKLRETNAGRCDTRQQYRK) the chain is Cytoplasmic. The chain crosses the membrane as a helical span at residues 405 to 425 (LLKSTLVLMPLFGVHYIVFMA). Over 426–439 (TPYTEVSGTLWQVQ) the chain is Extracellular. Residues 440 to 460 (MHYEMLFNSFQGFFVAIIYCF) traverse the membrane as a helical segment. The Cytoplasmic segment spans residues 461–595 (CNGEVQAEIK…LLQEEWETVM (135 aa)). The Important for interaction with G proteins motif lies at 473 to 476 (WSRW). A disordered region spans residues 528–595 (TTTATTNGHP…LLQEEWETVM (68 aa)). Residues 547-559 (APTLPATPPATAA) show a composition bias toward low complexity. Threonine 553 bears the Phosphothreonine mark.

Belongs to the G-protein coupled receptor 2 family. As to quaternary structure, homodimer in the absence of bound ligand. Peptide hormone binding leads to dissociation of the homodimer. Post-translationally, N-glycosylated. In terms of tissue distribution, high levels in the kidney, with much lower levels in aorta, heart, lung, prostate, testis, and skeletal muscle.

It localises to the cell membrane. Its function is as follows. G-protein-coupled receptor for parathyroid hormone (PTH) and for parathyroid hormone-related peptide (PTHLH). Ligand binding causes a conformation change that triggers signaling via guanine nucleotide-binding proteins (G proteins) and modulates the activity of downstream effectors, such as adenylate cyclase (cAMP). PTH1R is coupled to G(s) G alpha proteins and mediates activation of adenylate cyclase activity. PTHLH dissociates from PTH1R more rapidly than PTH; as consequence, the cAMP response induced by PTHLH decays faster than the response induced by PTH. The sequence is that of Parathyroid hormone/parathyroid hormone-related peptide receptor (PTH1R) from Canis lupus familiaris (Dog).